The chain runs to 438 residues: Glutamyl-tRNA reductase (438 aa).

Substrate is bound by residues 55–58 (TCNR), serine 118, 123–125 (ETQ), and glutamine 129. Cysteine 56 functions as the Nucleophile in the catalytic mechanism. Residue 198–203 (GAGDMI) coordinates NADP(+).

Belongs to the glutamyl-tRNA reductase family. Homodimer.

The enzyme catalyses (S)-4-amino-5-oxopentanoate + tRNA(Glu) + NADP(+) = L-glutamyl-tRNA(Glu) + NADPH + H(+). It functions in the pathway porphyrin-containing compound metabolism; protoporphyrin-IX biosynthesis; 5-aminolevulinate from L-glutamyl-tRNA(Glu): step 1/2. Catalyzes the NADPH-dependent reduction of glutamyl-tRNA(Glu) to glutamate 1-semialdehyde (GSA). In Polynucleobacter asymbioticus (strain DSM 18221 / CIP 109841 / QLW-P1DMWA-1) (Polynucleobacter necessarius subsp. asymbioticus), this protein is Glutamyl-tRNA reductase.